Consider the following 479-residue polypeptide: FAD-dependent monooxygenase atmM (479 aa).

Residues 10–30 form a helical membrane-spanning segment; the sequence is IIVGGSVAGLTLAHCLQRAGI. Glutamate 36, glycine 50, arginine 109, aspartate 309, and alanine 322 together coordinate FAD. Residues 445-465 form a helical membrane-spanning segment; that stretch reads WILVLLVIVVSFGLHSPELVI.

It belongs to the paxM FAD-dependent monooxygenase family. The cofactor is FAD.

It localises to the membrane. The protein operates within secondary metabolite biosynthesis. Functionally, FAD-dependent monooxygenase; part of the ATM1 gene cluster that mediates the biosynthesis of aflatrem, a tremorgenic mycotoxin with acute neurotoxic effects. Synthesis of geranylgeranyl diphosphate (GGPP) by AtmG (a GGPP synthase) precedes condensation of GGPP with indole 3-glycerol phosphate, followed by epoxidation and cyclization by AtmM (a FAD-dependent monooxygenase) and AtmC (a prenyltransferase) to produce paspaline. AtmB is also essential for paspaline production, but its exact role has not been identified yet. AtmP, a cytochrome P450 monooxygenase, subsequently converts paspaline to 13-desoxypaxilline via PC-M6 by removal of the C-30 methyl group and oxidation at C-10. AtmQ, a cytochrome P450 monooxygenase, then catalyzes the oxidation of 13-desoxypaxilline, first at C-7 to produce paspalicine and then at C-13 to form paspalinine. Finally, AtmD prenylates paspalinine to form aflatrem. This chain is FAD-dependent monooxygenase atmM, found in Aspergillus flavus.